The following is a 764-amino-acid chain: Protein FAR1-RELATED SEQUENCE 7 (764 aa).

The 77-residue stretch at 42 to 118 (DYYNSYATRT…QKEHNHDLGG (77 aa)) folds into the FAR1 1 domain. A disordered region spans residues 119–144 (HIEEAQTTPRPSVQQRAPAPTKLGIS). A compositionally biased stretch (polar residues) spans 123-133 (AQTTPRPSVQQ). One can recognise an FAR1 2 domain in the interval 204–280 (QFYQAYAEVV…NKDHNHDLEP (77 aa)). The MULE domain maps to 375 to 471 (AVVFDTSYRK…SAWQIRSKER (97 aa)). The SWIM-type zinc-finger motif lies at 650–686 (HAVTFSASNLNASCSCQMFEYEGLLCRHILKVFNLLD).

This sequence belongs to the FHY3/FAR1 family. Expressed in hypocotyls, rosette and cauline leaves, inflorescences stems, flowers and siliques.

Its subcellular location is the nucleus. Functionally, putative transcription activator involved in regulating light control of development. The sequence is that of Protein FAR1-RELATED SEQUENCE 7 (FRS7) from Arabidopsis thaliana (Mouse-ear cress).